Reading from the N-terminus, the 147-residue chain is uncharacterized protein (147 aa).

The HTH LytTR-type domain occupies 44–147 (LVGYIDKEIH…LKSIKERLSI (104 aa)).

Its subcellular location is the cytoplasm. This is an uncharacterized protein from Staphylococcus aureus (strain MW2).